Here is a 425-residue protein sequence, read N- to C-terminus: GTPase Obg (425 aa).

The Obg domain maps to 1-158; sequence MFIDKARIFV…RWITLELKMI (158 aa). In terms of domain architecture, OBG-type G spans 159–330; that stretch reads ADVGLLGFPN…VIAYVSKMLK (172 aa). Residues 165-172, 190-194, 212-215, 282-285, and 311-313 contribute to the GTP site; these read GFPNVGKS, FTTLT, DIPG, NKFD, and SAA. Mg(2+)-binding residues include S172 and T192. The OCT domain occupies 344–425; that stretch reads YRPELDIGTE…IYELEFEFYN (82 aa).

Belongs to the TRAFAC class OBG-HflX-like GTPase superfamily. OBG GTPase family. In terms of assembly, monomer. It depends on Mg(2+) as a cofactor.

It is found in the cytoplasm. Functionally, an essential GTPase which binds GTP, GDP and possibly (p)ppGpp with moderate affinity, with high nucleotide exchange rates and a fairly low GTP hydrolysis rate. Plays a role in control of the cell cycle, stress response, ribosome biogenesis and in those bacteria that undergo differentiation, in morphogenesis control. This Clostridioides difficile (strain 630) (Peptoclostridium difficile) protein is GTPase Obg.